The following is a 298-amino-acid chain: MASNVTNKTDPRSMNSRVFIGNLNTLVVKKSDVEAIFSKYGKIVGCSVHKGFAFVQYVNERNARAAVAGEDGRMIAGQVLDINLAAEPKVNRGKAGVKRSAAEMYGSSFDLDYDFQRDYYDRMYSYPARVPPPPPIARAVVPSKRQRVSGNTSRRGKSGFNSKSGQRGSSSKSVKGDDLQAIKKELTQIKQKVDSLLESLEKIEKEQSKQADLSFSSPVEMKNEKSEEEQSSASVKKDETNVKMESEAGADDSAEEGDLLDDDDNEDRGDDQLELKDDEKEPEEGEDDRDSANGEDDS.

Ala-2 is subject to N-acetylalanine. Residues Lys-8, Lys-50, Lys-89, and Lys-94 each participate in a glycyl lysine isopeptide (Lys-Gly) (interchain with G-Cter in SUMO2) cross-link. Residues 16–87 (SRVFIGNLNT…QVLDINLAAE (72 aa)) form the RRM domain. Ser-108 carries the post-translational modification Phosphoserine. 2 disordered regions span residues 131-177 (PPPP…VKGD) and 204-298 (EKEQ…EDDS). Positions 142-148 (PSKRQRV) match the Nuclear localization signal motif. A phosphoserine mark is found at Ser-149 and Ser-153. The segment covering 162–173 (SKSGQRGSSSKS) has biased composition (low complexity). Residue Lys-163 is modified to N6-acetyllysine; alternate. A Glycyl lysine isopeptide (Lys-Gly) (interchain with G-Cter in SUMO2); alternate cross-link involves residue Lys-163. The stretch at 176-211 (GDDLQAIKKELTQIKQKVDSLLESLEKIEKEQSKQA) forms a coiled coil. Residue Lys-209 forms a Glycyl lysine isopeptide (Lys-Gly) (interchain with G-Cter in SUMO2) linkage. A phosphoserine mark is found at Ser-214, Ser-216, and Ser-217. Lys-222 is covalently cross-linked (Glycyl lysine isopeptide (Lys-Gly) (interchain with G-Cter in SUMO2)). Residue Lys-225 forms a Glycyl lysine isopeptide (Lys-Gly) (interchain with G-Cter in SUMO2); alternate linkage. A Glycyl lysine isopeptide (Lys-Gly) (interchain with G-Cter in SUMO1); alternate cross-link involves residue Lys-225. Phosphoserine occurs at positions 226, 231, 232, and 234. Residues 235–246 (VKKDETNVKMES) show a composition bias toward basic and acidic residues. Glycyl lysine isopeptide (Lys-Gly) (interchain with G-Cter in SUMO2) cross-links involve residues Lys-236 and Lys-237. A Glycyl lysine isopeptide (Lys-Gly) (interchain with G-Cter in SUMO2); alternate cross-link involves residue Lys-243. A Glycyl lysine isopeptide (Lys-Gly) (interchain with G-Cter in SUMO); alternate cross-link involves residue Lys-243. 2 positions are modified to phosphoserine: Ser-246 and Ser-253. Residues 248–269 (AGADDSAEEGDLLDDDDNEDRG) show a composition bias toward acidic residues. A compositionally biased stretch (basic and acidic residues) spans 270–279 (DDQLELKDDE). A compositionally biased stretch (acidic residues) spans 280–298 (KEPEEGEDDRDSANGEDDS). Phosphoserine is present on residues Ser-291 and Ser-298.

Belongs to the RRM HNRPC family. RALY subfamily. In terms of assembly, tetramer composed of 3 copies of isoform C1 and 1 copy of isoform C2. Assembly of 3 tetramers with bound pre-mRNA gives rise to a 19S complex that interacts with HNRNPA2B1 tetramers. Component of the 40S hnRNP particle. Identified in the spliceosome C complex. Interacts with IGF2BP1. Interacts with PPIA/CYPA. Phosphorylated on Ser-253 and Ser-291 in resting cells. Post-translationally, sumoylated. Sumoylation reduces affinity for mRNA. In terms of processing, ubiquitinated and degraded after nucleo-cytoplasmic transport by YWHAE.

It localises to the nucleus. Functionally, binds pre-mRNA and nucleates the assembly of 40S hnRNP particles. Interacts with poly-U tracts in the 3'-UTR or 5'-UTR of mRNA and modulates the stability and the level of translation of bound mRNA molecules. Single HNRNPC tetramers bind 230-240 nucleotides. Trimers of HNRNPC tetramers bind 700 nucleotides. May play a role in the early steps of spliceosome assembly and pre-mRNA splicing. N6-methyladenosine (m6A) has been shown to alter the local structure in mRNAs and long non-coding RNAs (lncRNAs) via a mechanism named 'm(6)A-switch', facilitating binding of HNRNPC, leading to regulation of mRNA splicing. This is Heterogeneous nuclear ribonucleoprotein C from Rattus norvegicus (Rat).